Here is a 382-residue protein sequence, read N- to C-terminus: Neuropeptide Y receptor type 1 (382 aa).

Over 1 to 33 the chain is Extracellular; it reads MNSTLFSKVENHSIHYNASENSPLLAFENDDCH. N-linked (GlcNAc...) asparagine glycosylation is found at Asn-2, Asn-11, and Asn-17. The helical transmembrane segment at 34–54 threads the bilayer; it reads LPLAVIFTLALAYGAVIILGV. Topologically, residues 55-75 are cytoplasmic; that stretch reads SGNLALIIIILKQKEMRNVTN. The chain crosses the membrane as a helical span at residues 76–96; that stretch reads ILIVNLSFSDLLVAVMCLPFT. Residues 97-115 are Extracellular-facing; it reads FVYTLMDHWVFGETMCKLN. Cys-112 and Cys-197 are disulfide-bonded. The helical transmembrane segment at 116–136 threads the bilayer; that stretch reads PFVQCVSITVSIFSLVLIAVE. Residues 137 to 153 lie on the Cytoplasmic side of the membrane; that stretch reads RHQLIINPRGWRPNNRH. Residues 154–174 form a helical membrane-spanning segment; it reads AYIGITVIWVLAVASSLPFVI. Over 175–210 the chain is Extracellular; it reads YQILTDEPFQNVSLAAFKDKYVCFDKFPSDSHRLSY. The chain crosses the membrane as a helical span at residues 211–231; that stretch reads TTLLLVLQYFGPLCFIFICYF. The Cytoplasmic segment spans residues 232 to 259; it reads KIYIRLKRRNNMMDKIRDSKYRSSETKR. The helical transmembrane segment at 260–280 threads the bilayer; it reads INIMLLSIVVAFAVCWLPLTI. Residues 281 to 298 are Extracellular-facing; sequence FNTVFDWNHQIIATCNHN. The chain crosses the membrane as a helical span at residues 299-319; that stretch reads LLFLLCHLTAMISTCVNPIFY. The Cytoplasmic segment spans residues 320–382; it reads GFLNKNFQRD…KISMNDNEKV (63 aa). The S-palmitoyl cysteine moiety is linked to residue Cys-337. Phosphoserine occurs at positions 367 and 375.

The protein belongs to the G-protein coupled receptor 1 family. As to expression, the alpha form is highly expressed in the brain, heart, kidney, spleen, skeletal muscle, and lung, whereas the beta receptor mRNA was not detected in these tissues. However, the beta form is expressed in mouse embryonic developmental stage (7 and 11 days), bone marrow cells and several hematopoietic cell lines.

It is found in the cell membrane. In terms of biological role, receptor for neuropeptide Y and peptide YY. In Mus musculus (Mouse), this protein is Neuropeptide Y receptor type 1 (Npy1r).